The following is an 89-amino-acid chain: Long neurotoxin 1 (89 aa).

The first 21 residues, 1-21 (MKTLLLTLVVVTIVCLDLGDS), serve as a signal peptide directing secretion. Disulfide bonds link Cys-24–Cys-41, Cys-34–Cys-58, Cys-62–Cys-74, and Cys-75–Cys-80.

The protein belongs to the three-finger toxin family. Long-chain subfamily. Type II alpha-neurotoxin sub-subfamily. In terms of tissue distribution, expressed by the venom gland.

The protein resides in the secreted. Its function is as follows. Binds with high affinity to muscular (alpha-1/CHRNA1) and neuronal (alpha-7/CHRNA7) nicotinic acetylcholine receptor (nAChR) and inhibits acetylcholine from binding to the receptor, thereby impairing neuromuscular and neuronal transmission. The chain is Long neurotoxin 1 from Pseudonaja textilis (Eastern brown snake).